The following is a 372-amino-acid chain: Chorismate synthase (372 aa).

Residue Arg48 participates in NADP(+) binding. FMN-binding positions include 131–133 (RSS), 243–244 (NA), Gly288, 303–307 (KPTSS), and Arg329.

The protein belongs to the chorismate synthase family. In terms of assembly, homotetramer. FMNH2 is required as a cofactor.

The catalysed reaction is 5-O-(1-carboxyvinyl)-3-phosphoshikimate = chorismate + phosphate. It functions in the pathway metabolic intermediate biosynthesis; chorismate biosynthesis; chorismate from D-erythrose 4-phosphate and phosphoenolpyruvate: step 7/7. Its function is as follows. Catalyzes the anti-1,4-elimination of the C-3 phosphate and the C-6 proR hydrogen from 5-enolpyruvylshikimate-3-phosphate (EPSP) to yield chorismate, which is the branch point compound that serves as the starting substrate for the three terminal pathways of aromatic amino acid biosynthesis. This reaction introduces a second double bond into the aromatic ring system. The sequence is that of Chorismate synthase from Caulobacter vibrioides (strain ATCC 19089 / CIP 103742 / CB 15) (Caulobacter crescentus).